We begin with the raw amino-acid sequence, 502 residues long: Maturase K (502 aa).

It belongs to the intron maturase 2 family. MatK subfamily.

Its subcellular location is the plastid. The protein localises to the chloroplast. Usually encoded in the trnK tRNA gene intron. Probably assists in splicing its own and other chloroplast group II introns. The sequence is that of Maturase K from Fremontodendron californicum (California flannelbush).